We begin with the raw amino-acid sequence, 796 residues long: Peroxisome proliferator-activated receptor gamma coactivator 1-alpha (796 aa).

K77 is modified (N6-acetyllysine). The interval 98-138 is disordered; that stretch reads PVDEDGLPSFDALTDGDVTTENEASPSSMPDGTPPPQEAEE. The span at 114 to 127 shows a compositional bias: polar residues; it reads DVTTENEASPSSMP. Positions 142–146 match the LXXLL motif motif; it reads LKKLL. K144 is modified (N6-acetyllysine). Phosphothreonine; by AMPK is present on T176. Position 182 is an N6-acetyllysine (K182). Residues 211-275 form a disordered region; it reads YLTTNDDPPH…NDPKGSPFEN (65 aa). Residues 217–235 show a composition bias toward basic and acidic residues; the sequence is DPPHTKPTENRNSSRDKCT. Residues 242-258 are compositionally biased toward polar residues; it reads TQSQTQHLQAKPTTLSL. N6-acetyllysine is present on residues K252, K269, K276, and K319. Disordered stretches follow at residues 288 to 374 and 398 to 452; these read GTAG…AKRP and TSQE…RKQL. The interval 291–337 is interaction with PPARG; sequence GLTPPTTPPHKANQDNPFRASPKLKPSCKTVVPPPSKKARYSESSCT. The segment covering 332-344 has biased composition (polar residues); sequence SESSCTQGSNSTK. N6-acetyllysine occurs at positions 345 and 411. The segment at 348–796 is mediates interaction with RNF34; sequence EQSELYAQLS…LKEAQRSLRR (449 aa). The span at 401 to 412 shows a compositional bias: basic and acidic residues; the sequence is ELHDSRQLENKD. 2 stretches are compositionally biased toward polar residues: residues 413–428 and 439–450; these read APSSNGPGQIHSSTDS and VSRQVSPGSTRK. K450 is subject to N6-acetyllysine. S538 is subject to Phosphoserine; by AMPK. 3 disordered regions span residues 542–597, 609–637, and 648–667; these read FNSP…SSSR, HRTHRNSPLCASRSRSPHSRRPRYDSYEE, and YRREYEKRESERAKQRERQR. The segment covering 562–577 has biased composition (basic residues); that stretch reads QRMRSRSRSFSRHRSC. Over residues 578 to 597 the composition is skewed to low complexity; it reads SRSPYSRSRSRSPGSRSSSR. In terms of domain architecture, RRM spans 675–751; the sequence is RVIYVGKIRP…TDFELYFCGR (77 aa). An N6-acetyllysine mark is found at K756 and K777.

In terms of assembly, homooligomer. Interacts with MYBBP1A; inhibits MYBBP1A transcriptional activation. Interacts with PRDM16, LPIN1 and PML. Interacts (via LXXLL motif) with RORA and RORC (via AF-2 motif); activates RORA and RORC transcriptional activation. Interacts with LRPPRC. Interacts with FOXO1. Interacts with NR5A2. Post-translationally, phosphorylation by AMPK in skeletal muscle increases activation of its own promoter. Phosphorylated by CLK2. Heavily acetylated by KAT2A/GCN5 under conditions of high nutrients, leading to inactivation of PPARGC1A. Deacetylated by SIRT1 in low nutrients/high NAD conditions, leading to its activation. In terms of processing, ubiquitinated. Ubiquitination by RNF34 induces proteasomal degradation.

The protein resides in the nucleus. It localises to the PML body. Transcriptional coactivator for steroid receptors and nuclear receptors. Greatly increases the transcriptional activity of PPARG and thyroid hormone receptor on the uncoupling protein promoter. Can regulate key mitochondrial genes that contribute to the program of adaptive thermogenesis. Plays an essential role in metabolic reprogramming in response to dietary availability through coordination of the expression of a wide array of genes involved in glucose and fatty acid metabolism. Acts as a key regulator of gluconeogenesis: stimulates hepatic gluconeogenesis by increasing the expression of gluconeogenic enzymes, and acting together with FOXO1 to promote the fasting gluconeogenic program. Induces the expression of PERM1 in the skeletal muscle in an ESRRA-dependent manner. Also involved in the integration of the circadian rhythms and energy metabolism. Required for oscillatory expression of clock genes, such as BMAL1 and NR1D1, through the coactivation of RORA and RORC, and metabolic genes, such as PDK4 and PEPCK. This chain is Peroxisome proliferator-activated receptor gamma coactivator 1-alpha (PPARGC1A), found in Bos taurus (Bovine).